Here is an 85-residue protein sequence, read N- to C-terminus: Small ribosomal subunit protein uS17 (85 aa).

This sequence belongs to the universal ribosomal protein uS17 family. In terms of assembly, part of the 30S ribosomal subunit.

Its function is as follows. One of the primary rRNA binding proteins, it binds specifically to the 5'-end of 16S ribosomal RNA. The polypeptide is Small ribosomal subunit protein uS17 (Mycoplasma capricolum subsp. capricolum (strain California kid / ATCC 27343 / NCTC 10154)).